The sequence spans 415 residues: Lipid II:glycine glycyltransferase (415 aa).

This sequence belongs to the FemABX family.

It localises to the cytoplasm. It catalyses the reaction beta-D-GlcNAc-(1-&gt;4)-Mur2Ac(oyl-L-Ala-D-isoglutaminyl-L-Lys-D-Ala-D-Ala)-di-trans,octa-cis-undecaprenyl diphosphate + glycyl-tRNA(Gly) = beta-D-GlcNAc-(1-&gt;4)-Mur2Ac(oyl-L-Ala-D-isoglutaminyl-L-Lys-(N(6)-Gly)-D-Ala-D-Ala)-di-trans,octa-cis-undecaprenyl diphosphate + tRNA(Gly) + H(+). Functionally, catalyzes the incorporation of amino acid(s) into the interchain peptide bridge of peptidoglycan, using aminoacyl-tRNA as amino acid donor. The chain is Lipid II:glycine glycyltransferase (femX) from Staphylococcus saprophyticus subsp. saprophyticus (strain ATCC 15305 / DSM 20229 / NCIMB 8711 / NCTC 7292 / S-41).